We begin with the raw amino-acid sequence, 325 residues long: MKVFDYEDVQLIPNKCIVNSRSECDTTVILGKHAFKMPIVPANMQTIINRSIAEFLAENGYFYIMHRFNGSARIPFVKKMKERQWISSISVGVKKEEYLLIEELAKQGLTPDYITIDIAHGHSNSVIEMIQRIKTHLPETFVIAGNVGTPEAVRELENAGADATKVGIGPGKVCITKIKTGFGTGGWQLAALRWCAKAARKPIIADGGIRTHGDIAKSIRFGATMVMIGSLFAGHEESSGETKIENGIAYKEYFGSASEFQKGEKKNVEGKKIWIQHKGSLKDTLIEMHQDLQSSISYAGGRDLEAIRKVDYVIVKNSIFNGDTI.

Catalysis depends on cysteine 174, which acts as the Thioimidate intermediate. An NADP(+)-binding site is contributed by 203 to 226 (IIADGGIRTHGDIAKSIRFGATMV).

The protein belongs to the IMPDH/GMPR family. GuaC type 2 subfamily.

The catalysed reaction is IMP + NH4(+) + NADP(+) = GMP + NADPH + 2 H(+). In terms of biological role, catalyzes the irreversible NADPH-dependent deamination of GMP to IMP. It functions in the conversion of nucleobase, nucleoside and nucleotide derivatives of G to A nucleotides, and in maintaining the intracellular balance of A and G nucleotides. The sequence is that of GMP reductase from Helicobacter pylori (strain G27).